Consider the following 324-residue polypeptide: COP9 signalosome complex subunit 6 (324 aa).

Positions 38–171 constitute an MPN domain; sequence VALHPLVILN…VSVFESVIDI (134 aa).

Belongs to the peptidase M67A family. CSN6 subfamily. In terms of assembly, component of the CSN complex, composed of COPS1/GPS1, COPS2, COPS3, COPS4, COPS5, COPS6, COPS7 (COPS7A or COPS7B), COPS8 and COPS9. In the complex, it probably interacts directly with COPS2, COPS4, COPS5, COPS7 (COPS7A or COPS7B) and COPS9. Interacts with the translation initiation factor EIF3S6. Interacts weakly with RBX1. Directly interacts with COP1 and 14-3-3 protein sigma/SFN. Interacts with ERCC6.

The protein localises to the cytoplasm. It localises to the nucleus. Component of the COP9 signalosome complex (CSN), a complex involved in various cellular and developmental processes. The CSN complex is an essential regulator of the ubiquitin (Ubl) conjugation pathway by mediating the deneddylation of the cullin subunits of SCF-type E3 ligase complexes, leading to decrease the Ubl ligase activity of SCF-type complexes such as SCF, CSA or DDB2. The complex is also involved in phosphorylation of p53/TP53, c-jun/JUN, IkappaBalpha/NFKBIA, ITPK1 and IRF8, possibly via its association with CK2 and PKD kinases. CSN-dependent phosphorylation of TP53 and JUN promotes and protects degradation by the Ubl system, respectively. Has some glucocorticoid receptor-responsive activity. Stabilizes COP1 through reducing COP1 auto-ubiquitination and decelerating COP1 turnover rate, hence regulates the ubiquitination of COP1 targets, including SFN. This Bos taurus (Bovine) protein is COP9 signalosome complex subunit 6 (COPS6).